The sequence spans 305 residues: tRNA dimethylallyltransferase (305 aa).

9-16 is a binding site for ATP; that stretch reads GPTASGKT. Substrate is bound at residue 11–16; that stretch reads TASGKT. Interaction with substrate tRNA regions lie at residues 34-37, 158-162, and 239-244; these read DSAL, QRLSR, and RCVGYR.

The protein belongs to the IPP transferase family. In terms of assembly, monomer. It depends on Mg(2+) as a cofactor.

It carries out the reaction adenosine(37) in tRNA + dimethylallyl diphosphate = N(6)-dimethylallyladenosine(37) in tRNA + diphosphate. Catalyzes the transfer of a dimethylallyl group onto the adenine at position 37 in tRNAs that read codons beginning with uridine, leading to the formation of N6-(dimethylallyl)adenosine (i(6)A). This is tRNA dimethylallyltransferase from Aeromonas hydrophila subsp. hydrophila (strain ATCC 7966 / DSM 30187 / BCRC 13018 / CCUG 14551 / JCM 1027 / KCTC 2358 / NCIMB 9240 / NCTC 8049).